Here is a 455-residue protein sequence, read N- to C-terminus: Rhodopsin (455 aa).

Over 1 to 34 the chain is Extracellular; that stretch reads MVESTTLVNQTWWYNPTVDIHPHWAKFDPIPDAV. N-linked (GlcNAc...) asparagine glycosylation occurs at N9. Residues 35–59 form a helical membrane-spanning segment; sequence YYSVGIFIGVVGIIGILGNGVVIYL. Residues 60-71 lie on the Cytoplasmic side of the membrane; sequence FSKTKSLQTPAN. The chain crosses the membrane as a helical span at residues 72–98; sequence MFIINLAMSDLSFSAINGFPLKTISAF. Residues 99-110 lie on the Extracellular side of the membrane; the sequence is MKKWIFGKVACQ. An intrachain disulfide couples C109 to C187. Residues 111–132 form a helical membrane-spanning segment; it reads LYGLLGGIFGFMSINTMAMISI. Residues 133–135 carry the 'Ionic lock' involved in activated form stabilization motif; it reads DRY. Residues 133–152 are Cytoplasmic-facing; the sequence is DRYNVIGRPMAASKKMSHRR. A helical transmembrane segment spans residues 153–173; it reads AFLMIIFVWMWSIVWSVGPVF. Over 174-200 the chain is Extracellular; the sequence is NWGAYVPEGILTSCSFDYLSTDPSTRS. A helical transmembrane segment spans residues 201-225; sequence FILCMYFCGFMLPIIIIAFCYFNIV. Residues 226–262 are Cytoplasmic-facing; that stretch reads MSVSNHEKEMAAMAKRLNAKELRKAQAGASAEMKLAK. The chain crosses the membrane as a helical span at residues 263–284; that stretch reads ISMVIITQFMLSWSPYAIIALL. The Extracellular segment spans residues 285 to 294; sequence AQFGPAEWVT. A helical transmembrane segment spans residues 295-316; it reads PYAAELPVLFAKASAIHNPIVY. The residue at position 306 (K306) is an N6-(retinylidene)lysine. Over 317-455 the chain is Cytoplasmic; sequence SVSHPKFREA…QGVDNQAYQA (139 aa). 2 S-palmitoyl cysteine lipidation sites follow: C337 and C338. Residues 378 to 387 show a composition bias toward low complexity; it reads QKMQAQQAAY. Residues 378-455 are disordered; the sequence is QKMQAQQAAY…QGVDNQAYQA (78 aa). A compositionally biased stretch (pro residues) spans 388 to 433; the sequence is QPPPPPQGYPPQGYPPQGAYPPPQGYPPQGYPPQGYPPQGYPPQGA. A run of 6 repeats spans residues 395-399, 400-404, 412-416, 417-421, 422-426, and 427-431. Positions 395-431 are 6 X 5 AA repeats of G-Y-P-P-Q; the sequence is GYPPQGYPPQGAYPPPQGYPPQGYPPQGYPPQGYPPQ.

This sequence belongs to the G-protein coupled receptor 1 family. Opsin subfamily. Post-translationally, contains one covalently linked retinal chromophore. Upon light absorption, the covalently bound 11-cis-retinal is converted to all-trans-retinal. After hydrolysis of the Schiff base and release of the covalently bound all-trans-retinal, active rhodopsin is regenerated by binding of a fresh molecule of 11-cis-retinal.

It is found in the cell projection. The protein resides in the rhabdomere membrane. Functionally, photoreceptor required for image-forming vision at low light intensity. Light-induced isomerization of 11-cis to all-trans retinal triggers a conformational change that activates signaling via G-proteins. Signaling mediates the activation of phospholipase C. Subsequent receptor phosphorylation mediates displacement of the bound G-protein alpha subunit by arrestin and terminates signaling. In Enteroctopus dofleini (North Pacific giant octopus), this protein is Rhodopsin (RHO).